The chain runs to 588 residues: ATP-dependent lipid A-core flippase (588 aa).

6 helical membrane-spanning segments follow: residues 23-43, 56-76, 141-161, 162-182, 257-277, and 278-298; these read FWPV…IDAG, FITI…IGIT, DALT…TVMM, VICW…GIIV, LVIA…STVI, and TISA…IKPM. The 283-residue stretch at 28 to 310 folds into the ABC transmembrane type-1 domain; sequence LLGVLANILY…LTTLNATIQR (283 aa). Residues 342 to 576 enclose the ABC transporter domain; sequence IEFKHVYHAY…DGHYAQLYKV (235 aa). 375–382 is an ATP binding site; the sequence is GHSGSGKT.

It belongs to the ABC transporter superfamily. Lipid exporter (TC 3.A.1.106) family. Homodimer.

It is found in the cell inner membrane. It carries out the reaction ATP + H2O + lipid A-core oligosaccharideSide 1 = ADP + phosphate + lipid A-core oligosaccharideSide 2.. Functionally, involved in lipopolysaccharide (LPS) biosynthesis. Translocates lipid A-core from the inner to the outer leaflet of the inner membrane. Transmembrane domains (TMD) form a pore in the inner membrane and the ATP-binding domain (NBD) is responsible for energy generation. The polypeptide is ATP-dependent lipid A-core flippase (Legionella pneumophila (strain Paris)).